A 175-amino-acid polypeptide reads, in one-letter code: uncharacterized protein (175 aa).

It belongs to the asfivirus B175L family.

This is an uncharacterized protein from Ornithodoros (relapsing fever ticks).